The primary structure comprises 202 residues: Small ribosomal subunit protein uS4 (202 aa).

The disordered stretch occupies residues 22–43; that stretch reads TRKSARRAYPPGQHGQNRRKRS. Residues 90 to 152 form the S4 RNA-binding domain; sequence MRLDNTVFRL…EKSKEMVKTN (63 aa).

It belongs to the universal ribosomal protein uS4 family. As to quaternary structure, part of the 30S ribosomal subunit. Contacts protein S5. The interaction surface between S4 and S5 is involved in control of translational fidelity.

One of the primary rRNA binding proteins, it binds directly to 16S rRNA where it nucleates assembly of the body of the 30S subunit. In terms of biological role, with S5 and S12 plays an important role in translational accuracy. The sequence is that of Small ribosomal subunit protein uS4 from Trichodesmium erythraeum (strain IMS101).